A 148-amino-acid chain; its full sequence is Glutaredoxin-C10 (148 aa).

The tract at residues 16-55 is disordered; the sequence is TLDLTVHPPPPPPLPPPAPSTVSSSTASTSLSFDEEETSE. A compositionally biased stretch (pro residues) spans 22–34; it reads HPPPPPPLPPPAP. Residues 35-47 are compositionally biased toward low complexity; that stretch reads STVSSSTASTSLS. Residues 55 to 147 enclose the Glutaredoxin domain; sequence ESKIGRLISE…PRLVEVGALW (93 aa). Cys-76 and Cys-79 are disulfide-bonded.

This sequence belongs to the glutaredoxin family. CC-type subfamily.

The protein localises to the cytoplasm. In terms of biological role, has a glutathione-disulfide oxidoreductase activity in the presence of NADPH and glutathione reductase. Reduces low molecular weight disulfides and proteins. This is Glutaredoxin-C10 (GRXC10) from Arabidopsis thaliana (Mouse-ear cress).